The primary structure comprises 567 residues: UPF0313 protein TM_0337 (567 aa).

Residues 288–560 (KAIETVKFSI…NKMKENVLFK (273 aa)) form the Radical SAM core domain. [4Fe-4S] cluster is bound by residues Cys-303, Cys-307, and Cys-310.

This sequence belongs to the UPF0313 family. [4Fe-4S] cluster is required as a cofactor.

This chain is UPF0313 protein TM_0337, found in Thermotoga maritima (strain ATCC 43589 / DSM 3109 / JCM 10099 / NBRC 100826 / MSB8).